We begin with the raw amino-acid sequence, 452 residues long: DNA primase DnaG (452 aa).

Residues aspartate 172 to proline 248 form the Toprim domain. Residues glutamate 178, aspartate 222, and aspartate 224 each contribute to the Mg(2+) site. The segment at lysine 289–glutamine 320 is disordered. The span at glutamine 294–glutamine 320 shows a compositional bias: low complexity.

Belongs to the archaeal DnaG primase family. As to quaternary structure, forms a ternary complex with MCM helicase and DNA. Component of the archaeal exosome complex. Mg(2+) is required as a cofactor.

The enzyme catalyses ssDNA + n NTP = ssDNA/pppN(pN)n-1 hybrid + (n-1) diphosphate.. In terms of biological role, RNA polymerase that catalyzes the synthesis of short RNA molecules used as primers for DNA polymerase during DNA replication. Also part of the exosome, which is a complex involved in RNA degradation. Acts as a poly(A)-binding protein that enhances the interaction between heteromeric, adenine-rich transcripts and the exosome. The protein is DNA primase DnaG of Caldivirga maquilingensis (strain ATCC 700844 / DSM 13496 / JCM 10307 / IC-167).